Consider the following 394-residue polypeptide: Tubby-like F-box protein 2 (394 aa).

Residues 21–44 form a disordered region; it reads SKRSWSKSSHIAPDQTTPPLDNIP. Residues 26 to 44 show a composition bias toward polar residues; sequence SKSSHIAPDQTTPPLDNIP. Residues 46 to 101 form the F-box domain; sequence SPWASLPPELLHDIIWRVEESETAWPARAAVVSCASVCKSWRGITMEIVRIPEQCG. 2 disordered regions span residues 200–225 and 268–297; these read ASSTAQAQPNRRLHPKQAAPKLPTNS and IEEEVSSSPSPKGETITTDKEIPDNSPSLR.

The protein belongs to the TUB family. As to expression, ubiquitous.

In Arabidopsis thaliana (Mouse-ear cress), this protein is Tubby-like F-box protein 2.